Reading from the N-terminus, the 96-residue chain is Large ribosomal subunit protein bL27 (96 aa).

A disordered region spans residues 13-33; that stretch reads KGGGSTANGRNSAGRRLGAKA.

The protein belongs to the bacterial ribosomal protein bL27 family.

The polypeptide is Large ribosomal subunit protein bL27 (Lactobacillus acidophilus (strain ATCC 700396 / NCK56 / N2 / NCFM)).